Reading from the N-terminus, the 96-residue chain is MKIVKESLAGTFESSDLLVKVAPADGKLTVVINSEVIKQFGHQIKQVVNDTLKELGVQEGTIIVDDKGALDCVIRARVQSAVLRATDGQQIEWEKL.

Ser-14 carries the post-translational modification O-(phosphoribosyl dephospho-coenzyme A)serine.

It belongs to the CitD family. As to quaternary structure, oligomer with a subunit composition of (alpha,beta,gamma)6.

Its subcellular location is the cytoplasm. Covalent carrier of the coenzyme of citrate lyase. The polypeptide is Citrate lyase acyl carrier protein (Pectobacterium atrosepticum (strain SCRI 1043 / ATCC BAA-672) (Erwinia carotovora subsp. atroseptica)).